A 316-amino-acid polypeptide reads, in one-letter code: uncharacterized protein (316 aa).

This is an uncharacterized protein from Caenorhabditis elegans.